The chain runs to 704 residues: Phosphatidylinositol-3,5-bisphosphate 3-phosphatase MTMR8 (704 aa).

One can recognise a Myotubularin phosphatase domain in the interval 126–500 (GWKLIDPISD…YNIQFWCGMY (375 aa)). A 1,2-diacyl-sn-glycero-3-phospho-(1D-myo-inositol-3,5-bisphosphate)-binding residues include Asn-250, Asn-275, and Ile-276. Positions 250, 275, and 276 each coordinate a 1,2-diacyl-sn-glycero-3-phospho-(1D-myo-inositol-3-phosphate). Residue Cys-338 is the Phosphocysteine intermediate of the active site. The a 1,2-diacyl-sn-glycero-3-phospho-(1D-myo-inositol-3,5-bisphosphate) site is built by Ser-339, Asp-340, Gly-341, Trp-342, Asp-343, Arg-344, Lys-380, and Arg-384. Residues Ser-339, Asp-340, Gly-341, Trp-342, Asp-343, and Arg-344 each contribute to the a 1,2-diacyl-sn-glycero-3-phospho-(1D-myo-inositol-3-phosphate) site. Residues Ser-339 and Asp-340 each coordinate phosphate. 3 residues coordinate phosphate: Trp-342, Asp-343, and Arg-344. Residue Arg-384 participates in a 1,2-diacyl-sn-glycero-3-phospho-(1D-myo-inositol-3-phosphate) binding. Residues 515 to 541 (ESLLEIKKQRAMLETDVHELEKKLKVR) are a coiled coil.

This sequence belongs to the protein-tyrosine phosphatase family. Non-receptor class myotubularin subfamily. As to quaternary structure, homodimer. Heterodimer with MTMR9.

The protein localises to the nucleus envelope. It catalyses the reaction a 1,2-diacyl-sn-glycero-3-phospho-(1D-myo-inositol-3,5-bisphosphate) + H2O = a 1,2-diacyl-sn-glycero-3-phospho-(1D-myo-inositol-5-phosphate) + phosphate. The catalysed reaction is a 1,2-diacyl-sn-glycero-3-phospho-(1D-myo-inositol-3-phosphate) + H2O = a 1,2-diacyl-sn-glycero-3-phospho-(1D-myo-inositol) + phosphate. It carries out the reaction 1,2-dioctanoyl-sn-glycero-3-phospho-(1D-myo-inositol-3,5-bisphosphate) + H2O = 1,2-dioctanoyl-sn-glycero-3-phospho-(1D-myo-inositol-5-phosphate) + phosphate. Interaction with MTMR9 increases phosphatase activity. Lipid phosphatase that specifically dephosphorylates the D-3 position of phosphatidylinositol 3-phosphate and phosphatidylinositol 3,5-bisphosphate, generating phosphatidylinositol and phosphatidylinositol 5-phosphate. In complex with MTMR9, negatively regulates autophagy. The polypeptide is Phosphatidylinositol-3,5-bisphosphate 3-phosphatase MTMR8 (Homo sapiens (Human)).